The primary structure comprises 149 residues: Calmodulin (149 aa).

An N-acetylalanine modification is found at Ala2. 4 consecutive EF-hand domains span residues 8–43, 44–79, 81–116, and 117–149; these read EQIAEFKEAFSLFDKDGDGTITTKELGTVMRSLGQN, PTEAELADMINEVDADGNGTIDFPEFLTMMARKMKD, DSEEEILEAFKVFDKDGNGFISAAELRHIMTNLGEK, and LTDEEVDEMIREADIDGDGQINYEEFVKMMMSK. Asp21, Asp23, Asp25, Thr27, Glu32, Asp57, Asp59, Asn61, Thr63, Glu68, Asp94, Asp96, Asn98, and Glu105 together coordinate Ca(2+). Lys116 is subject to N6,N6,N6-trimethyllysine. 5 residues coordinate Ca(2+): Asp130, Asp132, Asp134, Gln136, and Glu141.

Belongs to the calmodulin family.

In terms of biological role, calmodulin mediates the control of a large number of enzymes, ion channels and other proteins by Ca(2+). Among the enzymes to be stimulated by the calmodulin-Ca(2+) complex are a number of protein kinases and phosphatases. This Saccharina japonica (Sweet kelp) protein is Calmodulin (cam).